We begin with the raw amino-acid sequence, 654 residues long: Pentatricopeptide repeat-containing protein At5g61400 (654 aa).

PPR repeat units follow at residues 37-71 (SSFS…RVSK), 74-104 (DLQS…LIER), 131-161 (SIGV…MKCS), 163-197 (DSKA…GLVP), 198-232 (DVHI…GIKP), 233-267 (NVYI…GVLP), 268-302 (NLYT…ELLP), 303-337 (NVVV…GVDP), 338-372 (NLYV…NLSP), 373-407 (DVFT…RIFP), 408-442 (SSAT…GVEP), 443-477 (NIIT…GIVP), 478-512 (DVVT…GIHP), 513-543 (NDHT…NNQQ), 548-582 (NHVG…GITP), and 583-617 (DICS…GILP).

It belongs to the PPR family. P subfamily.

The sequence is that of Pentatricopeptide repeat-containing protein At5g61400 from Arabidopsis thaliana (Mouse-ear cress).